Here is a 304-residue protein sequence, read N- to C-terminus: MSTPDSTLVKAFLLDLQNRICNGLEALDGAAQFAEDSWKREEGGGGQSRVLTGGAVFEQAGVNFSHVMGASMPASATAHRPELAGRSFEAMGVSLVIHPKNPHIPTTHANVRFFIAHKEGADPVWWFGGGFDLTPYYPYLEDVVEWHQSAKSLCEPFGEEVYPKYKQWCDEYFWLPHRNETRGVGGLFFDDLNKQGFEQSFAFMQAVGNGFLTAYAPIVERRRDTEYGEHERQFQLYRRGRYVEFNLVYDRGTLFGLQTGGRTESILMSMPPLVRWEYAYTPEAGGPEAQLYSDYLKPRDWLNL.

Serine 94 provides a ligand contact to substrate. A divalent metal cation-binding residues include histidine 98 and histidine 108. Histidine 108 serves as the catalytic Proton donor. Substrate is bound at residue 110–112 (NVR). Histidine 147 and histidine 177 together coordinate a divalent metal cation. Residues 242–277 (YVEFNLVYDRGTLFGLQTGGRTESILMSMPPLVRWE) are important for dimerization. Position 260–262 (260–262 (GGR)) interacts with substrate.

The protein belongs to the aerobic coproporphyrinogen-III oxidase family. In terms of assembly, homodimer. It depends on a divalent metal cation as a cofactor.

Its subcellular location is the cytoplasm. It catalyses the reaction coproporphyrinogen III + O2 + 2 H(+) = protoporphyrinogen IX + 2 CO2 + 2 H2O. Its pathway is porphyrin-containing compound metabolism; protoporphyrin-IX biosynthesis; protoporphyrinogen-IX from coproporphyrinogen-III (O2 route): step 1/1. Functionally, involved in the heme biosynthesis. Catalyzes the aerobic oxidative decarboxylation of propionate groups of rings A and B of coproporphyrinogen-III to yield the vinyl groups in protoporphyrinogen-IX. In Shewanella pealeana (strain ATCC 700345 / ANG-SQ1), this protein is Oxygen-dependent coproporphyrinogen-III oxidase.